Consider the following 317-residue polypeptide: MPADTRPAAIVLMGPTASGKSQLAIDIAKRWGGEVISVDSVLVYRGLDIGTAKPNAAMRASVPHHLIDICEPWETYSAADFAHDARAAIDMIVRRGALPILTGGTGLYFRALLAGLSDMPPAHPEIRAMITAEAKRDSWATLHTRLAEVDAITAARIHATDPQRIQRALEVYRVSGRSMSDWQKQPLKQRLPLRVLKLVLAPTHRKVLHFRIAQRFKAMLDNGLLAEVNALRTHPSIHAMARPLNLPAMRAVGYRQCWEHLDNMYTAETLYQRGVAATRQLAKRQLTWLRGELDALWFDPEHDQSRIEKVVEAFLNR.

Position 14–21 (14–21) interacts with ATP; sequence GPTASGKS. 16 to 21 lines the substrate pocket; it reads TASGKS. 2 interaction with substrate tRNA regions span residues 39 to 42 and 163 to 167; these read DSVL and QRIQR.

It belongs to the IPP transferase family. As to quaternary structure, monomer. Mg(2+) serves as cofactor.

It carries out the reaction adenosine(37) in tRNA + dimethylallyl diphosphate = N(6)-dimethylallyladenosine(37) in tRNA + diphosphate. Functionally, catalyzes the transfer of a dimethylallyl group onto the adenine at position 37 in tRNAs that read codons beginning with uridine, leading to the formation of N6-(dimethylallyl)adenosine (i(6)A). The protein is tRNA dimethylallyltransferase of Xylella fastidiosa (strain 9a5c).